Consider the following 214-residue polypeptide: ATP-dependent Clp protease proteolytic subunit (214 aa).

The active-site Nucleophile is the S114. H139 is an active-site residue.

Belongs to the peptidase S14 family. As to quaternary structure, fourteen ClpP subunits assemble into 2 heptameric rings which stack back to back to give a disk-like structure with a central cavity, resembling the structure of eukaryotic proteasomes.

It is found in the cytoplasm. The enzyme catalyses Hydrolysis of proteins to small peptides in the presence of ATP and magnesium. alpha-casein is the usual test substrate. In the absence of ATP, only oligopeptides shorter than five residues are hydrolyzed (such as succinyl-Leu-Tyr-|-NHMec, and Leu-Tyr-Leu-|-Tyr-Trp, in which cleavage of the -Tyr-|-Leu- and -Tyr-|-Trp bonds also occurs).. Cleaves peptides in various proteins in a process that requires ATP hydrolysis. Has a chymotrypsin-like activity. Plays a major role in the degradation of misfolded proteins. In Nitrosomonas europaea (strain ATCC 19718 / CIP 103999 / KCTC 2705 / NBRC 14298), this protein is ATP-dependent Clp protease proteolytic subunit.